The sequence spans 452 residues: Lamina-associated polypeptide 2, isoform beta (452 aa).

Residues 1-409 (MPEFLEDPSV…KSEKTKKGRS (409 aa)) are nucleoplasmic. An LEM-like domain is found at 5-48 (LEDPSVLTKDKLKSELVANNVTLPAGEQRKDVYVQLYLQHLTAR). 2 disordered regions span residues 48 to 113 (RNRP…DVTE) and 149 to 264 (REQG…VEPS). Positions 49 to 107 (NRPPLAAGANSKGPPDFSSDEEREPTPVLGSGASVGRGRGAVGRKATKKTDKPRPEDKD) are linker. Phosphoserine is present on residues Ser66 and Ser67. The residue at position 74 (Thr74) is a Phosphothreonine. Position 82 is a phosphoserine (Ser82). Arg85 and Arg87 each carry omega-N-methylarginine. A compositionally biased stretch (basic and acidic residues) spans 96-105 (KKTDKPRPED). One can recognise an LEM domain in the interval 108–152 (DLDVTELSNEELLEQLVRYGVNPGPIVGTTRKLYEKKLLKLREQG). The segment at 137-242 (TRKLYEKKLL…TSGSSKGGPL (106 aa)) is NAKAP95-binding N. Residues 154-177 (ESRSSTPLPTVSSSAENTRQNGSN) show a composition bias toward polar residues. A phosphoserine mark is found at Ser155 and Ser158. Residue Thr159 is modified to Phosphothreonine. Residues Ser165, Ser167, Ser176, Ser179, and Ser183 each carry the phosphoserine modification. The span at 178 to 202 (DSDRYSDNDEDSKIELKLEKREPLK) shows a compositional bias: basic and acidic residues. Lys206 carries the N6-acetyllysine modification. The tract at residues 298 to 370 (TGNFKHASSI…SCRRPIKGAA (73 aa)) is binds lamins B. The NAKAP95-binding C stretch occupies residues 299-373 (GNFKHASSIL…RPIKGAAGRP (75 aa)). Phosphoserine occurs at positions 305, 306, and 361. Residue Lys388 is modified to N6-acetyllysine. The helical; Signal-anchor for type II membrane protein transmembrane segment at 410–430 (VPMWIKMLLFALVAGFLFLVY) threads the bilayer. At 431-452 (QAMETNQGNPFTNFLQDTKISN) the chain is on the lumenal side.

This sequence belongs to the LEM family. Interacts with LMNB1, LMNB2, BANF1, AKAP8L, GMCL and chromosomes. Post-translationally, mitosis-specific phosphorylation specifically abolishes its binding to lamin B and chromosomes.

The protein resides in the nucleus inner membrane. The protein localises to the chromosome. In terms of biological role, binds directly to lamin B1 and chromosomes in a mitotic phosphorylation-regulated manner. May play an important role in nuclear envelope reassembly at the end of mitosis and/or anchoring of the nuclear lamina and interphase chromosomes to the nuclear envelope. The sequence is that of Lamina-associated polypeptide 2, isoform beta (Tmpo) from Rattus norvegicus (Rat).